We begin with the raw amino-acid sequence, 808 residues long: Probable E3 ubiquitin-protein ligase hulA (808 aa).

Residues 1–112 (MGSNLPAQPN…QMGGDEMLTR (112 aa)) enclose the C2 domain. Disordered stretches follow at residues 134-231 (NLST…GWER) and 275-346 (RRAH…YFVD). Composition is skewed to polar residues over residues 142–159 (QANG…SSGL) and 171–198 (GPSQ…PSST). The span at 199-210 (VAPVNGAAAPGA) shows a compositional bias: low complexity. The segment covering 211-220 (SRTNLSSFED) has biased composition (polar residues). Residues 223-256 (GRLPAGWERREDNLGRTYYVDHNTRTTTWTRPSS) form the WW 1 domain. Basic and acidic residues predominate over residues 275–288 (RRAHQSRMLPEDRT). The span at 289–303 (GASSPNLQENQQAQT) shows a compositional bias: polar residues. A compositionally biased stretch (low complexity) spans 317–326 (ATGATTAGTG). WW domains are found at residues 326-359 (GELP…DPRR) and 386-419 (GPLP…DPRL). Positions 475-808 (SASDLKKRLM…VEETLGFGQE (334 aa)) constitute an HECT domain. Cys-776 (glycyl thioester intermediate) is an active-site residue.

It belongs to the RSP5/NEDD4 family. In terms of assembly, interacts with creD.

The protein localises to the cytoplasm. The catalysed reaction is S-ubiquitinyl-[E2 ubiquitin-conjugating enzyme]-L-cysteine + [acceptor protein]-L-lysine = [E2 ubiquitin-conjugating enzyme]-L-cysteine + N(6)-ubiquitinyl-[acceptor protein]-L-lysine.. It functions in the pathway protein modification; protein ubiquitination. Functionally, E3 ubiquitin-protein ligase which accepts ubiquitin from an E2 ubiquitin-conjugating enzyme in the form of a thioester and then directly transfers the ubiquitin to targeted substrates. Probably involved in the regulatory network controlling carbon source utilization. The protein is Probable E3 ubiquitin-protein ligase hulA (hulA) of Aspergillus terreus (strain NIH 2624 / FGSC A1156).